A 216-amino-acid polypeptide reads, in one-letter code: uncharacterized protein (216 aa).

S-adenosyl-L-methionine is bound by residues Gly-56 and Glu-77.

Belongs to the methyltransferase superfamily. YrrT family.

In terms of biological role, could be a S-adenosyl-L-methionine-dependent methyltransferase. This is an uncharacterized protein from Alkaliphilus oremlandii (strain OhILAs) (Clostridium oremlandii (strain OhILAs)).